The chain runs to 64 residues: Large ribosomal subunit protein bL28 (64 aa).

This sequence belongs to the bacterial ribosomal protein bL28 family.

The chain is Large ribosomal subunit protein bL28 from Persephonella marina (strain DSM 14350 / EX-H1).